A 500-amino-acid polypeptide reads, in one-letter code: Versicolorin B desaturase (500 aa).

A helical membrane pass occupies residues 3 to 23; the sequence is FLSLPSLVIVIPVGYLLFHLG. Residues N243 and N400 are each glycosylated (N-linked (GlcNAc...) asparagine). Heme is bound at residue C438.

This sequence belongs to the cytochrome P450 family. The cofactor is heme.

The protein localises to the membrane. The enzyme catalyses versicolorin B + NADPH + O2 + H(+) = versicolorin A + NADP(+) + 2 H2O. It functions in the pathway mycotoxin biosynthesis; aflatoxin biosynthesis. Its function is as follows. Versicolorin B desaturase; part of the gene cluster that mediates the biosynthesis of aflatoxins, a group of polyketide-derived furanocoumarins, and part of the most toxic and carcinogenic compounds among the known mycotoxins. The four major aflatoxins produced by A.parasiticus are aflatoxin B1 (AFB1), aflatoxin B2 (AFB2), aflatoxin G1 (AFG1) and aflatoxin G2 (AFG2). Within the aflatoxin pathway, the versicolorin B desaturase aflL catalyzes the conversion of versicolorin B (VERB) to versicolorin A (VERA). The biosynthesis of aflatoxins begins with the norsolorinic acid synthase aflC that combines a hexanoyl starter unit produced by the fatty acid synthase aflA/aflB and 7 malonyl-CoA extender units to synthesize the precursor NOR. The second step is the conversion of NOR to averantin and requires the norsolorinic acid ketoreductase aflD, which catalyzes the dehydration of norsolorinic acid to form (1'S)-averantin. The norsolorinic acid reductases aflE and aflF may also play a role in the conversion of NOR to AVN. The cytochrome P450 monooxygenase aflG then catalyzes the hydroxylation of AVN to 5'hydroxyaverantin (HAVN). The next step is performed by the 5'-hydroxyaverantin dehydrogenase aflH that transforms HAVN to 5'-oxoaverantin (OAVN) which is further converted to averufin (AVF) by aflK that plays a dual role in the pathway, as a 5'-oxoaverantin cyclase that mediates conversion of 5'-oxoaverantin, as well as a versicolorin B synthase in a later step in the pathway. The averufin oxidase aflI catalyzes the conversion of AVF to versiconal hemiacetal acetate (VHA). VHA is then the substrate for the versiconal hemiacetal acetate esterase aflJ to yield versiconal (VAL). Versicolorin B synthase aflK then converts VAL to versicolorin B (VERB) by closing the bisfuran ring of aflatoxin which is required for DNA-binding, thus giving to aflatoxin its activity as a mutagen. Then, the activity of the versicolorin B desaturase aflL leads to versicolorin A (VERA). A branch point starts from VERB since it can also be converted to dihydrodemethylsterigmatocystin (DMDHST), probably also by aflL, VERA being a precursor for aflatoxins B1 and G1, and DMDHST for aflatoxins B2 and G2. Next, the versicolorin reductase aflM and the cytochrome P450 monooxygenase aflN are involved in conversion of VERA to demethylsterigmatocystin (DMST). AflX and aflY seem also involved in this step, through probable aflX-mediated epoxide ring-opening step following versicolorin A oxidation and aflY-mediated Baeyer-Villiger oxidation required for the formation of the xanthone ring. The methyltransferase aflO then leads to the modification of DMST to sterigmatocystin (ST), and of DMDHST to dihydrosterigmatocystin (DHST). Both ST and DHST are then substrates of the O-methyltransferase aflP to yield O-methylsterigmatocystin (OMST) and dihydro-O-methylsterigmatocystin (DHOMST), respectively. Finally OMST is converted to aflatoxins B1 and G1, and DHOMST to aflatoxins B2 and G2, via the action of several enzymes including O-methylsterigmatocystin oxidoreductase aflQ, the cytochrome P450 monooxygenase aflU, but also the NADH-dependent flavin oxidoreductase nadA which is specifically required for the synthesis of AFG1. The protein is Versicolorin B desaturase of Aspergillus parasiticus (strain ATCC 56775 / NRRL 5862 / SRRC 143 / SU-1).